The primary structure comprises 352 residues: MLELNFSQTLGNHCLTINETLPANGITAIFGVSGAGKTSLINAISGLTRPQKGRIVLNGRVLNDAEKGICLSPEKRRVGYVFQDARLFPHYKVRGNLRYGMAKSMVNQFDKLVALLGIEPLLDRLPGSLSGGEKQRVAIGRALLTAPELLLLDEPLASLDIPRKRELLPYLQRLTREINIPMLYVSHSLDEILHLADRVMVLENGQVKAFGALEEVWGSSVMNPWLPKEQQSSILKVTVLEHHPHYAMTALALGDQHLWVNKLDEPLQAALRIRIQASDVSLVLQPPQQTSIRNVLRAKVVNSYDDNGQVEVELEVGGKTLWARISPWARDELAIKPGLWLYAQIKSVSITA.

Positions 1–229 constitute an ABC transporter domain; it reads MLELNFSQTL…SVMNPWLPKE (229 aa). ATP is bound at residue 31-38; sequence GVSGAGKT. The Mop domain maps to 289 to 352; sequence QTSIRNVLRA…AQIKSVSITA (64 aa).

The protein belongs to the ABC transporter superfamily. Molybdate importer (TC 3.A.1.8) family. The complex is composed of two ATP-binding proteins (ModC), two transmembrane proteins (ModB) and a solute-binding protein (ModA).

It is found in the cell inner membrane. It catalyses the reaction molybdate(out) + ATP + H2O = molybdate(in) + ADP + phosphate + H(+). Functionally, part of the ABC transporter complex ModABC involved in molybdenum import. Responsible for energy coupling to the transport system. The sequence is that of Molybdenum import ATP-binding protein ModC from Escherichia coli O6:K15:H31 (strain 536 / UPEC).